The sequence spans 135 residues: Agouti-signaling protein (135 aa).

The first 22 residues, 1 to 22 (MNILRLLLATLLVCLCLLTAYS), serve as a signal peptide directing secretion. Residue asparagine 39 is glycosylated (N-linked (GlcNAc...) asparagine). The interval 56–101 (NKKSKKISRKEAEKKRSSKKKASMKNVAQPRRPRPPPPAPCVATRD) is disordered. 5 cysteine pairs are disulfide-bonded: cysteine 96-cysteine 111, cysteine 103-cysteine 117, cysteine 110-cysteine 128, cysteine 114-cysteine 135, and cysteine 119-cysteine 126. One can recognise an Agouti domain in the interval 96 to 135 (CVATRDSCKPPAPACCDPCASCQCRFFRSSCSCRVLNPTC).

The protein resides in the secreted. In terms of biological role, involved in the regulation of melanogenesis. The binding of ASP to MC1R precludes alpha-MSH initiated signaling and thus blocks production of cAMP, leading to a down-regulation of eumelanogenesis (brown/black pigment) and thus increasing synthesis of pheomelanin (yellow/red pigment). The chain is Agouti-signaling protein (ASIP) from Felis catus (Cat).